We begin with the raw amino-acid sequence, 1350 residues long: ABC-type transporter MDR1 (1350 aa).

A compositionally biased stretch (basic and acidic residues) spans 1 to 11; the sequence is MDTVHEGHHGS. Residues 1 to 84 form a disordered region; that stretch reads MDTVHEGHHG…DEGEDPFAHL (84 aa). The span at 22–33 shows a compositional bias: polar residues; the sequence is VEVTNYEKTQLG. Residues 52 to 63 show a composition bias toward basic residues; sequence KKHKSQKEKKHK. The ABC transmembrane type-1 1 domain maps to 121 to 411; it reads VLSALSSIIG…VAPNIQAFTT (291 aa). Helical transmembrane passes span 124 to 144, 170 to 190, 243 to 263, 271 to 291, 350 to 370, and 380 to 400; these read ALSS…FGGL, LYFL…TAGF, KVGL…VSFI, ILMS…GFIV, GSMI…AFWM, and IEVG…FALG. One can recognise an ABC transporter 1 domain in the interval 446 to 691; sequence IELRNIRHIY…QGAYYNLVEA (246 aa). 481–488 provides a ligand contact to ATP; it reads GESGSGKS. Positions 712–731 are enriched in basic and acidic residues; the sequence is KDQNLKHETTKGEQPEDGLK. Residues 712-734 are disordered; the sequence is KDQNLKHETTKGEQPEDGLKLAR. A run of 6 helical transmembrane segments spans residues 779 to 799, 830 to 850, 903 to 923, 929 to 949, 1014 to 1034, and 1044 to 1064; these read IGII…VFFA, FMLA…FAVC, LGTI…SLAI, LVCI…FWML, ASQS…GTLI, and FFLC…IFSF. The ABC transmembrane type-1 2 domain occupies 779-1070; that stretch reads IGIICSVITG…IFSFAPDMGK (292 aa). Positions 1105-1343 constitute an ABC transporter 2 domain; that stretch reads IEFRDVHFRY…RGRYWELVNL (239 aa). N-linked (GlcNAc...) asparagine glycosylation occurs at Asn-1127. Position 1140–1147 (1140–1147) interacts with ATP; sequence GASGCGKS.

It belongs to the ABC transporter superfamily. ABCB family. Multidrug resistance exporter (TC 3.A.1.201) subfamily.

It localises to the cell membrane. ABC-type transporter that is involved in the secretion of liamocins, glycolipids (also called heavy oils) composed of a single mannitol or arabitol headgroup linked to either three, four or even six 3,5-dihydroxydecanoic ester tail-groups. In Aureobasidium melanogenum (Aureobasidium pullulans var. melanogenum), this protein is ABC-type transporter MDR1.